A 364-amino-acid chain; its full sequence is Dihydroorotate dehydrogenase (quinone) (364 aa).

Residues 61–65 and T85 each bind FMN; that span reads AGFDK. Substrate is bound at residue K65. 110 to 114 lines the substrate pocket; that stretch reads NRMGF. 2 residues coordinate FMN: N139 and N170. Position 170 (N170) interacts with substrate. Catalysis depends on S173, which acts as the Nucleophile. N175 provides a ligand contact to substrate. The FMN site is built by K214 and A242. Substrate is bound at residue 243-244; sequence NT. FMN contacts are provided by residues G266, G295, and 316-317; that span reads YS.

The protein belongs to the dihydroorotate dehydrogenase family. Type 2 subfamily. Monomer. Requires FMN as cofactor.

The protein localises to the cell membrane. It carries out the reaction (S)-dihydroorotate + a quinone = orotate + a quinol. The protein operates within pyrimidine metabolism; UMP biosynthesis via de novo pathway; orotate from (S)-dihydroorotate (quinone route): step 1/1. In terms of biological role, catalyzes the conversion of dihydroorotate to orotate with quinone as electron acceptor. The polypeptide is Dihydroorotate dehydrogenase (quinone) (Rhodopseudomonas palustris (strain BisB5)).